The primary structure comprises 267 residues: Collectin-11 (267 aa).

Residues 1 to 21 (MKRALALMGLAFLCVLRAGAA) form the signal peptide. A disordered region spans residues 40–109 (GDAGEKGDKG…GPNGEPGIPC (70 aa)). Basic and acidic residues-rich tracts occupy residues 41–50 (DAGEKGDKGA) and 62–71 (EKGDVGDKGQ). Residues 49-108 (GAPGRPGRVGPTGEKGDVGDKGQKGGVGRHGKIGPIGSKGEKGDSGDIGPPGPNGEPGIP) form the Collagen-like domain. Positions 110–144 (ECSQLRKAIGEMDNQVTQLTAELKFIKNAVAGVRE) form a coiled coil. Residues 145 to 261 (TEQKMYLLVK…CHLTMHFLCE (117 aa)) form the C-type lectin domain. 2 disulfides stabilise this stretch: Cys-166–Cys-260 and Cys-238–Cys-252. Arg-196 is an a carbohydrate binding site. Residues Asp-203, Glu-207, Glu-228, Asn-230, Asn-231, Asp-234, Glu-236, and Asp-237 each contribute to the Ca(2+) site. Position 236 (Glu-236) interacts with a carbohydrate. Residues Glu-240 and 248-250 (NDV) each bind a carbohydrate. Positions 248 and 249 each coordinate Ca(2+).

This sequence belongs to the COLEC10/COLEC11 family. As to quaternary structure, homotrimer; disulfide-linked. Interacts with MASP1; probably triggers the lectin pathway of complement.

The protein resides in the secreted. Its function is as follows. Lectin that plays a role in innate immunity, apoptosis and embryogenesis. Calcium-dependent lectin that binds self and non-self glycoproteins presenting high mannose oligosaccharides with at least one terminal alpha-1,2-linked mannose epitope. Primarily recognizes the terminal disaccharide of the glycan. Also recognizes a subset of fucosylated glycans and lipopolysaccharides. Plays a role in innate immunity through its ability to bind non-self sugars presented by microorganisms and to activate the complement through the recruitment of MAPS1. Also plays a role in apoptosis through its ability to bind in a calcium-independent manner the DNA present at the surface of apoptotic cells and to activate the complement in response to this binding. Finally, plays a role in development, probably serving as a guidance cue during the migration of neural crest cells and other cell types during embryogenesis. The sequence is that of Collectin-11 (COLEC11) from Bos taurus (Bovine).